Reading from the N-terminus, the 82-residue chain is Small ribosomal subunit protein bS16 (82 aa).

Belongs to the bacterial ribosomal protein bS16 family.

This chain is Small ribosomal subunit protein bS16, found in Clostridium botulinum (strain Okra / Type B1).